The chain runs to 240 residues: 7-cyano-7-deazaguanine synthase (240 aa).

Position 9-19 (9-19 (FSGGLDSTACL)) interacts with ATP. Positions 195, 210, 213, and 216 each coordinate Zn(2+).

This sequence belongs to the QueC family. Requires Zn(2+) as cofactor.

It catalyses the reaction 7-carboxy-7-deazaguanine + NH4(+) + ATP = 7-cyano-7-deazaguanine + ADP + phosphate + H2O + H(+). The protein operates within purine metabolism; 7-cyano-7-deazaguanine biosynthesis. Functionally, catalyzes the ATP-dependent conversion of 7-carboxy-7-deazaguanine (CDG) to 7-cyano-7-deazaguanine (preQ(0)). In Pyrococcus furiosus (strain ATCC 43587 / DSM 3638 / JCM 8422 / Vc1), this protein is 7-cyano-7-deazaguanine synthase.